Consider the following 358-residue polypeptide: uncharacterized protein (358 aa).

Residue 29–36 (GPINSGKT) participates in ATP binding.

This sequence belongs to the archaeal ATPase family.

This is an uncharacterized protein from Methanocaldococcus jannaschii (strain ATCC 43067 / DSM 2661 / JAL-1 / JCM 10045 / NBRC 100440) (Methanococcus jannaschii).